A 535-amino-acid chain; its full sequence is Nuclear/nucleolar GTPase 2 (535 aa).

The interval 1-42 (MAKKKERAVNVSGKPRHSLDVNRANDKKGAGGGAGGGGGGRS) is disordered. Basic and acidic residues predominate over residues 17-29 (HSLDVNRANDKKG). A compositionally biased stretch (gly residues) spans 30-41 (AGGGAGGGGGGR). The CP-type G domain occupies 213-374 (WGELYKVIDS…LIDCPGVVYQ (162 aa)). Positions 261–264 (NKCD) are G4. The tract at residues 290 to 292 (SIN) is G5. The tract at residues 323–330 (GYPNVGKS) is G1. The interval 349–353 (GETKV) is G2. Positions 367–370 (DCPG) are G3. The disordered stretch occupies residues 464–494 (FFVPPPQQGEDSPSETAEPVEKSDEEGVSSD).

This sequence belongs to the TRAFAC class YlqF/YawG GTPase family. RsgA subfamily. In terms of assembly, interacts (via N-terminus) with the 60S ribosomal proteins RPL10A. This interaction is enhanced by the addition of GTP. Expressed in roots, shoot apical meristem, leaves, leaf sheaths and flowers.

Its subcellular location is the nucleus. It localises to the nucleolus. The GTPase activity is stimulated in the presence of ribosomes, particularly of the 60S subunit. In terms of biological role, GTPase involved in pre-60S ribosomal subunit maturation. This chain is Nuclear/nucleolar GTPase 2, found in Oryza sativa subsp. japonica (Rice).